We begin with the raw amino-acid sequence, 142 residues long: MRHLNQTCKLNRTTSHRRCMFANMLKSLISNERIETTVPKAKALRRYADRMITLAKKNTLSARRQAIAELMIRFNPLTPKEQRAAKEGNTQAYNDDRLVIGKLFDVLGTRFATRQGGYTRIVKQGHRVGDNAQTCIIEYLTD.

It belongs to the bacterial ribosomal protein bL17 family. As to quaternary structure, part of the 50S ribosomal subunit. Contacts protein L32.

This is Large ribosomal subunit protein bL17 from Protochlamydia amoebophila (strain UWE25).